The following is a 10746-amino-acid chain: Extracellular matrix-binding protein ebh (10746 aa).

The N-terminal stretch at 1-39 (MNYRDKIQKFSIRKYTVGTFSTVIATLVFLGLNTSQAQA) is a signal peptide. 2 stretches are compositionally biased toward polar residues: residues 41–59 (ETNQ…GDTQ) and 67–113 (VQNS…SQNE). 3 disordered regions span residues 41 to 174 (ETNQ…GNVQ), 246 to 274 (MPQR…PRSV), and 1340 to 1372 (IAGN…DGQR). Residues 120–130 (AAATPTQSAKA) are compositionally biased toward low complexity. Residues 132 to 158 (SKHEQSESRAANKKENDNKATHVESHE) show a composition bias toward basic and acidic residues. A compositionally biased stretch (polar residues) spans 162 to 173 (VTASDSSDSGNV). Residues 248 to 263 (QRQQTSRRSSRIQTRS) show a composition bias toward low complexity. The segment covering 1356 to 1372 (YKTTGYSQSNPTSDGQR) has biased composition (polar residues). FIVAR domains are found at residues 2520–2576 (AKNH…VNAA), 2606–2662 (SKNN…ISDE), 2683–2746 (DTHE…VQTA), 2776–2832 (AKTK…IAAK), 2860–2915 (AKTQ…IRQN), 2943–2998 (AKNQ…INTN), 3026–3081 (AKTQ…INDK), 3150–3208 (AMTK…VNQK), 3276–3335 (AMTG…VNNA), 3403–3461 (AMGN…VNSA), 3529–3587 (AMGN…VTEA), 3655–3713 (AMNT…ITQK), 3781–3839 (AMAS…VEAA), 3907–3965 (AMGN…VEQA), 4033–4091 (AMGQ…VTAA), 4159–4217 (AMKG…ITQA), 4285–4343 (QMGN…VEAA), 4411–4469 (AMAN…VENA), 4537–4595 (AMGT…INQI), 4663–4721 (AMGQ…VDRA), 4789–4847 (AMNS…VDNA), 4915–4973 (AMGA…INGM), 5041–5099 (AMTV…VNSA), 5167–5225 (AMKG…ITQA), 5293–5351 (AMHS…VEQA), 5419–5477 (AMGQ…VERA), 5545–5603 (AMTA…VTNA), 5671–5729 (AMKG…INQA), 5797–5855 (AMTN…VESA), 5923–5981 (AMSN…VEQA), 6049–6107 (AMNQ…INQK), 6175–6232 (AMGN…VQAA), 6300–6358 (AMGQ…VEAA), 6426–6484 (AMQR…VEQA), 6552–6610 (AMDQ…VTAA), 6678–6736 (AMNQ…VTQA), 6804–6862 (AMER…VEAA), 6930–6988 (AMGN…VEAA), 7056–7114 (AMDK…INQA), 7182–7240 (AMGN…VEQA), 7308–7366 (AMTQ…ITAA), 7434–7492 (AMTQ…IQQA), 7560–7618 (AMTN…VEQA), 7686–7744 (AMTQ…VAQA), 7812–7870 (AMGT…VTQA), 7938–7996 (AMSN…ITRA), 8064–8125 (AMDQ…ITNE), 8190–8251 (AMDQ…ITNE), 8316–8374 (AMEL…VNRA), 8442–8500 (AMGN…VEQA), 8568–8625 (AMHG…INQA), 8693–8751 (LMDA…VTSA), 8819–8877 (AMKA…IDQA), 8945–9003 (AMEA…VEQL), 9071–9129 (AMQA…VEQL), 9197–9255 (AMET…VDQA), 9323–9377 (SMDQ…VDQA), 9445–9504 (VMDQ…VIKL), and 9699–9755 (AMET…INGA). Residues 7066–7080 (DNATTKQNQNYTDSS) are compositionally biased toward polar residues. The tract at residues 7066–7085 (DNATTKQNQNYTDSSPNKKD) is disordered. Positions 10492-10507 (DHSKPSSNSDGQSNSH) are enriched in polar residues. A disordered region spans residues 10492–10530 (DHSKPSSNSDGQSNSHLHVGYGTVNHPFNSSPIGHKKKL). The helical transmembrane segment at 10552–10572 (IKNALGVVGISGLLASFWFFI) threads the bilayer. Residues 10649–10746 (RRKEDEEDVE…KKKKSKKNKK (98 aa)) form a disordered region. The span at 10664–10674 (TDEKVLQDNEH) shows a compositional bias: basic and acidic residues. Positions 10719-10746 (KGKKSASKKPSKKVAAKKKKKKSKKNKK) are enriched in basic residues.

The protein resides in the cell membrane. In Staphylococcus aureus (strain MRSA252), this protein is Extracellular matrix-binding protein ebh (ebh).